The sequence spans 447 residues: N-succinylarginine dihydrolase (447 aa).

Substrate contacts are provided by residues 19 to 28 (AGLSFGNEAS), asparagine 110, and 137 to 138 (HR). Residue glutamate 174 is part of the active site. Arginine 212 is a substrate binding site. The active site involves histidine 248. The substrate site is built by aspartate 250 and asparagine 359. Residue cysteine 365 is the Nucleophile of the active site.

This sequence belongs to the succinylarginine dihydrolase family. In terms of assembly, homodimer.

The enzyme catalyses N(2)-succinyl-L-arginine + 2 H2O + 2 H(+) = N(2)-succinyl-L-ornithine + 2 NH4(+) + CO2. Its pathway is amino-acid degradation; L-arginine degradation via AST pathway; L-glutamate and succinate from L-arginine: step 2/5. Catalyzes the hydrolysis of N(2)-succinylarginine into N(2)-succinylornithine, ammonia and CO(2). This is N-succinylarginine dihydrolase from Salmonella arizonae (strain ATCC BAA-731 / CDC346-86 / RSK2980).